A 414-amino-acid polypeptide reads, in one-letter code: Enterobactin exporter EntS (414 aa).

The Cytoplasmic portion of the chain corresponds to 1–21; that stretch reads MNRQSWLLNLSLLKTHPAFRA. A helical membrane pass occupies residues 22-42; sequence VFLARFISIVSLGLLGVAVPV. Residues 43-55 lie on the Periplasmic side of the membrane; that stretch reads QIQMMTHSTWQVG. The helical transmembrane segment at 56-76 threads the bilayer; sequence LSVTLTGGAMFIGLMVGGVLA. Topologically, residues 77–83 are cytoplasmic; it reads DRYERKK. A helical membrane pass occupies residues 84–104; the sequence is VILLARGTCGIGFIGLCVNAL. The Periplasmic portion of the chain corresponds to 105–109; the sequence is LPEPS. A helical transmembrane segment spans residues 110-130; that stretch reads LLAIYLLGLWDGFFASLGVTA. Over 131–156 the chain is Cytoplasmic; sequence LLAATPALVGRENLMQAGAITMLTVR. A helical transmembrane segment spans residues 157–177; it reads LGSVISPMLGGILLASGGVAW. Position 178 (N178) is a topological domain, periplasmic. The chain crosses the membrane as a helical span at residues 179–199; that stretch reads YGLAAAGTFITLLPLLTLPRL. At 200-218 the chain is on the cytoplasmic side; the sequence is PVPPQPRENPFLALLAAFR. The helical transmembrane segment at 219–239 threads the bilayer; the sequence is FLLACPLIGGIALLGGLVTMA. Topologically, residues 240–256 are periplasmic; it reads SAVRVLYPALAMSWQMS. A helical membrane pass occupies residues 257–277; it reads AAQIGLLYAAIPLGAAIGALT. At 278–287 the chain is on the cytoplasmic side; the sequence is SGQLAHSVRP. A helical transmembrane segment spans residues 288–307; that stretch reads GLIMLVSTVGSFLAVGLFAI. The Periplasmic portion of the chain corresponds to 308 to 313; that stretch reads MPVWIA. A helical membrane pass occupies residues 314–336; sequence GVICLALFGWLSAISSLLQYTLL. The Cytoplasmic segment spans residues 337 to 356; the sequence is QTQTPENMLGRMNGLWTAQN. Residues 357-377 form a helical membrane-spanning segment; that stretch reads VTGDAIGAALLGGLGAMMTPV. Position 378 (A378) is a topological domain, periplasmic. The helical transmembrane segment at 379-399 threads the bilayer; that stretch reads SASVSGFGLVIIGLLLLLVLG. The Cytoplasmic portion of the chain corresponds to 400–414; that stretch reads ELRRFRQTSPVSDAG.

The protein belongs to the major facilitator superfamily. EntS (TC 2.A.1.38) family.

The protein resides in the cell inner membrane. Component of an export pathway for enterobactin. The protein is Enterobactin exporter EntS of Salmonella paratyphi A (strain ATCC 9150 / SARB42).